A 1077-amino-acid polypeptide reads, in one-letter code: Error-prone DNA polymerase (1077 aa).

Belongs to the DNA polymerase type-C family. DnaE2 subfamily.

It localises to the cytoplasm. It catalyses the reaction DNA(n) + a 2'-deoxyribonucleoside 5'-triphosphate = DNA(n+1) + diphosphate. Its function is as follows. DNA polymerase involved in damage-induced mutagenesis and translesion synthesis (TLS). It is not the major replicative DNA polymerase. This chain is Error-prone DNA polymerase, found in Brucella melitensis biotype 1 (strain ATCC 23456 / CCUG 17765 / NCTC 10094 / 16M).